The chain runs to 389 residues: ATP phosphoribosyltransferase regulatory subunit (389 aa).

This sequence belongs to the class-II aminoacyl-tRNA synthetase family. HisZ subfamily. As to quaternary structure, heteromultimer composed of HisG and HisZ subunits.

It is found in the cytoplasm. The protein operates within amino-acid biosynthesis; L-histidine biosynthesis; L-histidine from 5-phospho-alpha-D-ribose 1-diphosphate: step 1/9. Its function is as follows. Required for the first step of histidine biosynthesis. May allow the feedback regulation of ATP phosphoribosyltransferase activity by histidine. This Moorella thermoacetica (strain ATCC 39073 / JCM 9320) protein is ATP phosphoribosyltransferase regulatory subunit.